The following is a 1175-amino-acid chain: Potassium/sodium hyperpolarization-activated cyclic nucleotide-gated channel 4 (1175 aa).

Residues 1–259 (MDKLPPSMRK…SAGFWIIHPY (259 aa)) are Cytoplasmic-facing. A disordered region spans residues 17–186 (QQVGAKAWIM…SSCGEQRPAD (170 aa)). Over residues 26-36 (MDEEEDAEEEG) the composition is skewed to acidic residues. A compositionally biased stretch (low complexity) spans 60 to 75 (PSAAAAAAGGAESRGA). Residues 111-126 (SRGGGGGGGSTGGGSH) show a composition bias toward gly residues. Residues 128-140 (HLHDSAEERRLIA) are compositionally biased toward basic and acidic residues. Serine 145 is modified (phosphoserine). Residues 162 to 175 (PGAPAPPAASPPQV) show a composition bias toward pro residues. The chain crosses the membrane as a helical span at residues 260 to 288 (SDFRFYWDLTMLLLMVGNLIIIPVGITFF). At 289-292 (KDEN) the chain is on the extracellular side. A helical transmembrane segment spans residues 293–316 (TTPWIVFNVVSDTFFLIDLVLNFR). Residues 317-329 (TGIVVEDNTDIIL) are Cytoplasmic-facing. A helical transmembrane segment spans residues 330–352 (DPRRIKMKYLKSWFVVDFVSSIP). Topologically, residues 353-374 (VDYIFLIVETRIDSEVYKTARA) are extracellular. Residues 375–410 (LRIVRFTKILSLLRLLRLSRLIRYIHQWEEIFHMTY) traverse the membrane as a helical; Voltage-sensor segment. Residues 411-413 (DLA) are Cytoplasmic-facing. A helical transmembrane segment spans residues 414-444 (SAVVRIVNLIGMMLLLCHWDGCLQFLVPMLQ). The Extracellular portion of the chain corresponds to 445–449 (DFPDD). Residues 450 to 478 (CWVSLNNMVNNSWGKQYSYALFKAMSHML) constitute an intramembrane region (pore-forming). The Extracellular portion of the chain corresponds to 479–488 (CIGYGRQAPM). Residues 489 to 521 (GMSDVWLTMLSMIVGATCYAMFIGHATALIQSL) traverse the membrane as a helical segment. The Cytoplasmic segment spans residues 522–1175 (DSSRRQYQEK…PVRSKLPSNL (654 aa)). 3',5'-cyclic GMP is bound by residues tyrosine 560, lysine 563, phenylalanine 565, and glutamate 567. Residues glycine 660, glutamate 661, cysteine 663, arginine 670, threonine 671, valine 674, and arginine 711 each coordinate 3',5'-cyclic AMP. 2 disordered regions span residues 801 to 820 (AIFRPPPGPTTLGSLGAGQT) and 830 to 1175 (LAPS…PSNL). Low complexity-rich tracts occupy residues 839–854 (SPASSPSQPDTPSSAS), 900–912 (LGGSLSSSDSPLL), 948–966 (SPTSSPGQLGQPPGELSPG), and 984–1004 (RLPFAAGASAGASPVAFSPRG). A compositionally biased stretch (pro residues) spans 1038-1050 (ASSPPPPPPPPAP). Phosphoserine is present on residues serine 1089 and serine 1093. Pro residues predominate over residues 1102 to 1114 (PPFPRAPGRPPGA).

This sequence belongs to the potassium channel HCN family. In terms of assembly, homotetramer. The channel is composed of a homo- or heterotetrameric complex of pore-forming subunits. Interacts with PEX5L with a 4:4 HCN4:PEX5L stoichiometry; reduces the effects of cAMP on the voltage-dependence and rate of activation. Interacts with IRAG1; regulates HCN4 channel activity. Interacts with IRAG2; regulates HCN4 channel activity. In terms of processing, S-palmitoylated. Highly expressed in the heart sinoatrial node (SAN). Not detected in atrium, ventricle, forebrain or cerebellum. Detected at very low levels in total brain.

It is found in the cell membrane. The enzyme catalyses K(+)(in) = K(+)(out). It catalyses the reaction Na(+)(in) = Na(+)(out). With respect to regulation, activated by cAMP and to a lesser extent by cGMP and cCMP. cAMP binding causes a conformation change that leads to the assembly of an active tetramer and channel opening by shifting the voltage-dependency towards more positive voltages. Binding of cAMP removes a tonic inhibition conferred by cyclic nucleotide-binding domain (CNBD) on channel opening. Cyclic dinucleotides can modulate HCN4 channel; cyclic dinucleotides acting as potent antagonists of cAMP. Inhibited by extracellular Cs(+) ions. Auxiliary subunits can also regulate HCN4 channel. IRAG1 causes a gain-of-function by shifting HCN4 activation to more depolarized membrane potentials in the absence of cAMP. In contrast, IRAG2 causes a loss-of-function by inhibiting cAMP-dependent potentiation of HCN4 activation. Functionally, hyperpolarization-activated ion channel that are permeable to Na(+) and K(+) ions with very slow activation and inactivation. Exhibits higher selectivity for K(+) over Na(+) ions. Contributes to the native pacemaker currents in heart (If) that regulate the rhythm of heart beat. Contributes to the native pacemaker currents in neurons (Ih). May mediate responses to sour stimuli. In Oryctolagus cuniculus (Rabbit), this protein is Potassium/sodium hyperpolarization-activated cyclic nucleotide-gated channel 4 (HCN4).